The primary structure comprises 294 residues: Elongation factor Ts (294 aa).

The segment at 78 to 81 (TDFV) is involved in Mg(2+) ion dislocation from EF-Tu.

The protein belongs to the EF-Ts family.

The protein resides in the cytoplasm. Its function is as follows. Associates with the EF-Tu.GDP complex and induces the exchange of GDP to GTP. It remains bound to the aminoacyl-tRNA.EF-Tu.GTP complex up to the GTP hydrolysis stage on the ribosome. This chain is Elongation factor Ts, found in Mycoplasma mobile (strain ATCC 43663 / 163K / NCTC 11711) (Mesomycoplasma mobile).